Here is a 305-residue protein sequence, read N- to C-terminus: Tyrosine recombinase XerC (305 aa).

The Core-binding (CB) domain maps to 4-95 (ISIQELIKQW…TVKNFYKFLE (92 aa)). Residues 116–298 (LLPKALSVDD…SIKHLEAVYN (183 aa)) enclose the Tyr recombinase domain. Residues Arg-159, Lys-182, His-250, Arg-253, and His-276 contribute to the active site. The active-site O-(3'-phospho-DNA)-tyrosine intermediate is the Tyr-285.

It belongs to the 'phage' integrase family. XerC subfamily. In terms of assembly, forms a cyclic heterotetrameric complex composed of two molecules of XerC and two molecules of XerD.

It is found in the cytoplasm. Site-specific tyrosine recombinase, which acts by catalyzing the cutting and rejoining of the recombining DNA molecules. The XerC-XerD complex is essential to convert dimers of the bacterial chromosome into monomers to permit their segregation at cell division. It also contributes to the segregational stability of plasmids. The sequence is that of Tyrosine recombinase XerC from Rickettsia typhi (strain ATCC VR-144 / Wilmington).